Consider the following 356-residue polypeptide: Stomatin-like protein 2, mitochondrial (356 aa).

A mitochondrion-targeting transit peptide spans 1–28 (MLARAARGTGALLLRGSLLASGRAPRRA). S17 is modified (phosphoserine; by PKC/PRKCZ). A Phosphotyrosine modification is found at Y124. K145 carries the post-translational modification N6-acetyllysine; alternate. At K145 the chain carries N6-succinyllysine; alternate. Residues 215-252 (INVAEGKKQAQILASEAEKAEQINQAAGEASAVLAKAK) adopt a coiled-coil conformation. Residue K233 is modified to N6-acetyllysine. A disordered region spans residues 321–356 (KAPVPGTPDSLSSGSSRDVQGTDASLDEELDRVKMS). T327 bears the Phosphothreonine mark. The segment covering 329–343 (DSLSSGSSRDVQGTD) has biased composition (polar residues). A Phosphoserine modification is found at S330.

It belongs to the band 7/mec-2 family. As to quaternary structure, forms homooligomers. Interacts with MFN2; may form heterooligomers. Interacts with CACNA2D2. Interacts with PHB1 and PHB2; recruits them to cardiolipin-enriched mitochondrial membranes and stabilizes them. In terms of processing, hyperphosphorylated at Ser-17 in some patients with monoclonal gammopathy of undetermined significance (MGUS), multiple myeloma (MM) and Waldenstrom macroglobulinemia due to impaired dephosphorylation by PP2A. Ubiquitously expressed at low levels. Expressed in lymphoid tissues (at protein level).

It is found in the cell membrane. Its subcellular location is the mitochondrion. It localises to the mitochondrion inner membrane. The protein localises to the mitochondrion intermembrane space. The protein resides in the membrane raft. It is found in the cytoplasm. Its subcellular location is the cytoskeleton. Mitochondrial protein that probably regulates the biogenesis and the activity of mitochondria. Stimulates cardiolipin biosynthesis, binds cardiolipin-enriched membranes where it recruits and stabilizes some proteins including prohibitin and may therefore act in the organization of functional microdomains in mitochondrial membranes. Through regulation of the mitochondrial function may play a role into several biological processes including cell migration, cell proliferation, T-cell activation, calcium homeostasis and cellular response to stress. May play a role in calcium homeostasis through negative regulation of calcium efflux from mitochondria. Required for mitochondrial hyperfusion a pro-survival cellular response to stress which results in increased ATP production by mitochondria. May also regulate the organization of functional domains at the plasma membrane and play a role in T-cell activation through association with the T-cell receptor signaling complex and its regulation. The polypeptide is Stomatin-like protein 2, mitochondrial (STOML2) (Homo sapiens (Human)).